A 257-amino-acid polypeptide reads, in one-letter code: 5-keto-4-deoxy-D-glucarate aldolase (257 aa).

The Proton acceptor role is filled by histidine 51. Substrate is bound at residue glutamine 152. Glutamate 154 contributes to the Mg(2+) binding site. The substrate site is built by serine 179 and aspartate 180. Position 180 (aspartate 180) interacts with Mg(2+).

The protein belongs to the HpcH/HpaI aldolase family. KDGluc aldolase subfamily. In terms of assembly, homohexamer; trimer of dimers. Requires Mg(2+) as cofactor.

It catalyses the reaction 5-dehydro-4-deoxy-D-glucarate = 2-hydroxy-3-oxopropanoate + pyruvate. It carries out the reaction 2-dehydro-3-deoxy-D-glucarate = 2-hydroxy-3-oxopropanoate + pyruvate. It functions in the pathway carbohydrate acid metabolism; galactarate degradation; D-glycerate from galactarate: step 2/3. Its function is as follows. Catalyzes the reversible retro-aldol cleavage of both 5-keto-4-deoxy-D-glucarate and 2-keto-3-deoxy-D-glucarate to pyruvate and tartronic semialdehyde. The polypeptide is 5-keto-4-deoxy-D-glucarate aldolase (Shigella boydii serotype 18 (strain CDC 3083-94 / BS512)).